The primary structure comprises 204 residues: Inactive ribonuclease-like protein 9 (204 aa).

Residues Met1–Leu26 form the signal peptide. Cystine bridges form between Cys97–Cys152, Cys115–Cys167, and Cys122–Cys129. N-linked (GlcNAc...) asparagine glycosylation is found at Asn130 and Asn142.

The protein belongs to the pancreatic ribonuclease family.

The protein localises to the secreted. In terms of biological role, does not exhibit any ribonuclease activity. This is Inactive ribonuclease-like protein 9 (RNASE9) from Chlorocebus aethiops (Green monkey).